The following is a 254-amino-acid chain: Leucyl/phenylalanyl-tRNA--protein transferase (254 aa).

The protein belongs to the L/F-transferase family.

Its subcellular location is the cytoplasm. It catalyses the reaction N-terminal L-lysyl-[protein] + L-leucyl-tRNA(Leu) = N-terminal L-leucyl-L-lysyl-[protein] + tRNA(Leu) + H(+). It carries out the reaction N-terminal L-arginyl-[protein] + L-leucyl-tRNA(Leu) = N-terminal L-leucyl-L-arginyl-[protein] + tRNA(Leu) + H(+). The enzyme catalyses L-phenylalanyl-tRNA(Phe) + an N-terminal L-alpha-aminoacyl-[protein] = an N-terminal L-phenylalanyl-L-alpha-aminoacyl-[protein] + tRNA(Phe). Its function is as follows. Functions in the N-end rule pathway of protein degradation where it conjugates Leu, Phe and, less efficiently, Met from aminoacyl-tRNAs to the N-termini of proteins containing an N-terminal arginine or lysine. The chain is Leucyl/phenylalanyl-tRNA--protein transferase from Burkholderia ambifaria (strain MC40-6).